The primary structure comprises 349 residues: Protein-glutamate methylesterase/protein-glutamine glutaminase (349 aa).

A Response regulatory domain is found at 5 to 122; it reads KVLVVDDSAF…SLDLYKVKDE (118 aa). 4-aspartylphosphate is present on Asp56. Residues 156-349 enclose the CheB-type methylesterase domain; that stretch reads ARPQQAIVAI…AAAIVQLIGE (194 aa). Catalysis depends on residues Ser168, His195, and Asp291.

Belongs to the CheB family. Post-translationally, phosphorylated by CheA. Phosphorylation of the N-terminal regulatory domain activates the methylesterase activity.

It localises to the cytoplasm. It carries out the reaction [protein]-L-glutamate 5-O-methyl ester + H2O = L-glutamyl-[protein] + methanol + H(+). The catalysed reaction is L-glutaminyl-[protein] + H2O = L-glutamyl-[protein] + NH4(+). In terms of biological role, involved in chemotaxis. Part of a chemotaxis signal transduction system that modulates chemotaxis in response to various stimuli. Catalyzes the demethylation of specific methylglutamate residues introduced into the chemoreceptors (methyl-accepting chemotaxis proteins or MCP) by CheR. Also mediates the irreversible deamidation of specific glutamine residues to glutamic acid. In Geobacillus kaustophilus (strain HTA426), this protein is Protein-glutamate methylesterase/protein-glutamine glutaminase.